We begin with the raw amino-acid sequence, 149 residues long: uncharacterized protein (149 aa).

This is an uncharacterized protein from Methanocaldococcus jannaschii (strain ATCC 43067 / DSM 2661 / JAL-1 / JCM 10045 / NBRC 100440) (Methanococcus jannaschii).